The primary structure comprises 571 residues: Sporulation-specific protein 1 (571 aa).

Disordered regions lie at residues 1–53 (MRSS…EEDV), 67–133 (MTAF…PYRQ), and 482–501 (KEAK…SQPE). Positions 23–37 (SKQKKPTKFRERMRR) are enriched in basic residues. Polar residues-rich tracts occupy residues 67-86 (MTAF…NNFF), 95-121 (PVQS…QNPK), and 486-499 (NISS…SISQ). Coiled-coil stretches lie at residues 469 to 486 (DQLV…EAKN) and 542 to 566 (ESAS…DENV).

As to quaternary structure, interacts directly with ADY3. Probable component of a spindle pole body (SPB) complex composed of ADY3, SSP1, DON1, MPC54, SPO21/MPC70, NUD1 and CNM67. Post-translationally, phosphorylated.

It is found in the prospore membrane. Its function is as follows. Involved in the pathway that organizes the shaping and sizing of the prospore membrane (PSM) during sporulation. May be required for the formation of ADY3 and DON1-containing protein coats at the leading edge of the PSMs during meiosis II. This is Sporulation-specific protein 1 (SSP1) from Saccharomyces cerevisiae (strain ATCC 204508 / S288c) (Baker's yeast).